A 685-amino-acid polypeptide reads, in one-letter code: DNA ligase (685 aa).

NAD(+)-binding positions include aspartate 47–aspartate 51, serine 96–leucine 97, and glutamate 125. Lysine 127 serves as the catalytic N6-AMP-lysine intermediate. Residues arginine 148, glutamate 185, lysine 304, and lysine 328 each contribute to the NAD(+) site. Cysteine 422, cysteine 425, cysteine 440, and cysteine 446 together coordinate Zn(2+). In terms of domain architecture, BRCT spans alanine 605–arginine 685.

Belongs to the NAD-dependent DNA ligase family. LigA subfamily. Mg(2+) serves as cofactor. Mn(2+) is required as a cofactor.

The catalysed reaction is NAD(+) + (deoxyribonucleotide)n-3'-hydroxyl + 5'-phospho-(deoxyribonucleotide)m = (deoxyribonucleotide)n+m + AMP + beta-nicotinamide D-nucleotide.. DNA ligase that catalyzes the formation of phosphodiester linkages between 5'-phosphoryl and 3'-hydroxyl groups in double-stranded DNA using NAD as a coenzyme and as the energy source for the reaction. It is essential for DNA replication and repair of damaged DNA. The protein is DNA ligase of Shewanella putrefaciens (strain CN-32 / ATCC BAA-453).